A 196-amino-acid polypeptide reads, in one-letter code: ATP-dependent Clp protease proteolytic subunit (196 aa).

Ser96 (nucleophile) is an active-site residue. The active site involves His121.

Belongs to the peptidase S14 family. Fourteen ClpP subunits assemble into 2 heptameric rings which stack back to back to give a disk-like structure with a central cavity, resembling the structure of eukaryotic proteasomes.

It is found in the cytoplasm. It catalyses the reaction Hydrolysis of proteins to small peptides in the presence of ATP and magnesium. alpha-casein is the usual test substrate. In the absence of ATP, only oligopeptides shorter than five residues are hydrolyzed (such as succinyl-Leu-Tyr-|-NHMec, and Leu-Tyr-Leu-|-Tyr-Trp, in which cleavage of the -Tyr-|-Leu- and -Tyr-|-Trp bonds also occurs).. Its function is as follows. Cleaves peptides in various proteins in a process that requires ATP hydrolysis. Has a chymotrypsin-like activity. Plays a major role in the degradation of misfolded proteins. The sequence is that of ATP-dependent Clp protease proteolytic subunit from Streptococcus pyogenes serotype M3 (strain SSI-1).